Reading from the N-terminus, the 359-residue chain is MGSQFSVLNRKWLIERSIMIEKRKRRSNKLIKILMMGNENSAKSTFAKKVKSIYQSDKIENSDANSILPYIKLYLSNSFKDVIKFIQQHPQSPDTKPMVSTQLGIIAWDKLSSFNYIPFNFKPTKELAKYIYDICHDPLFKSYIYPIISSKREDAFYLIENCKRMSNDDYIPNDEDIIRCSKNNQSGVFDTKLEIGKSEFVFVDTGNQKCDRKKWVHQFEDVDIILFFLALDEFDLPPDEIKSQSQSVHDCYNKLNENILVFDEIVNNHFFSNTPVIVLFNKKEQLIEKLKTTTFSQHYPDYQSNSNNPNDIFSFISNQFKLRDHFPLNKRLFIHSFNSSDTNQIDFFQYVKKILEDTI.

The N-myristoyl glycine moiety is linked to residue Gly-2. Positions 29–359 constitute a G-alpha domain; sequence KLIKILMMGN…YVKKILEDTI (331 aa). Residues 32–45 are G1 motif; that stretch reads KILMMGNENSAKST. Ser-44 provides a ligand contact to Mg(2+). Residues 176–185 form a G2 motif region; it reads DIIRCSKNNQ. Residues 178–185, 204–208, and 281–284 contribute to the GTP site; these read IRCSKNNQ, DTGNQ, and NKKE. Positions 200 to 209 are G3 motif; that stretch reads FVFVDTGNQK. The interval 277 to 284 is G4 motif; the sequence is IVLFNKKE. The interval 337–342 is G5 motif; that stretch reads FNSSDT.

This sequence belongs to the G-alpha family.

This is Guanine nucleotide-binding protein-like alpha-11 subunit (gpaK) from Dictyostelium discoideum (Social amoeba).